The sequence spans 261 residues: RING-H2 finger protein ATL58 (261 aa).

A helical membrane pass occupies residues 25–45 (AFIFSVPICFTFIILFLFYLI). The RING-type; atypical zinc-finger motif lies at 100–142 (CSVCLGDYQPNDKLQQIPVCKHTFHMDCIDLWLTSHTTCPLCR). Disordered stretches follow at residues 149 to 227 (RSRQ…NDGH) and 241 to 261 (MEEDERNNIGTSSACCSCRTG). Positions 194–221 (SGVSSQPESQPVVNHRGVSSQPESQPVN) are enriched in polar residues.

It belongs to the RING-type zinc finger family. ATL subfamily.

Its subcellular location is the membrane. The catalysed reaction is S-ubiquitinyl-[E2 ubiquitin-conjugating enzyme]-L-cysteine + [acceptor protein]-L-lysine = [E2 ubiquitin-conjugating enzyme]-L-cysteine + N(6)-ubiquitinyl-[acceptor protein]-L-lysine.. The protein operates within protein modification; protein ubiquitination. The polypeptide is RING-H2 finger protein ATL58 (ATL58) (Arabidopsis thaliana (Mouse-ear cress)).